A 172-amino-acid chain; its full sequence is MVDKRESYTKEDLLASSRGELFGKEGPQLPAPNMLMMDRVVKMTDDGGNYNKGFVEAELDIHPDMWFFGCHFIGDPVMPGCLGLDAMWQLVGFYLGWLGGKGKGRALGVGEVKFTGQILPSAKKVTYRIHFRRVINRKLVMGMADGEVLCDGTVIYTASDLKVGLFKDTAAF.

Residue H71 is part of the active site.

The protein belongs to the thioester dehydratase family. FabA subfamily. As to quaternary structure, homodimer.

Its subcellular location is the cytoplasm. It catalyses the reaction a (3R)-hydroxyacyl-[ACP] = a (2E)-enoyl-[ACP] + H2O. The enzyme catalyses (3R)-hydroxydecanoyl-[ACP] = (2E)-decenoyl-[ACP] + H2O. The catalysed reaction is (2E)-decenoyl-[ACP] = (3Z)-decenoyl-[ACP]. It participates in lipid metabolism; fatty acid biosynthesis. In terms of biological role, necessary for the introduction of cis unsaturation into fatty acids. Catalyzes the dehydration of (3R)-3-hydroxydecanoyl-ACP to E-(2)-decenoyl-ACP and then its isomerization to Z-(3)-decenoyl-ACP. Can catalyze the dehydratase reaction for beta-hydroxyacyl-ACPs with saturated chain lengths up to 16:0, being most active on intermediate chain length. The chain is 3-hydroxydecanoyl-[acyl-carrier-protein] dehydratase from Sodalis glossinidius (strain morsitans).